The primary structure comprises 258 residues: Probable splicing factor, arginine/serine-rich 3 (258 aa).

The region spanning 9–83 (QKVYVGNLPG…RRIRVEFTRG (75 aa)) is the RRM 1 domain. Disordered stretches follow at residues 81–120 (TRGV…PQRR) and 190–258 (AYIR…PSPQ). Residues 97–107 (GGDHRGGDFRG) show a composition bias toward basic and acidic residues. A compositionally biased stretch (gly residues) spans 108-117 (GRGGGRGGGP). One can recognise an RRM 2 domain in the interval 123–197 (YRVIVEGLPP…ETAYIRVRED (75 aa)). Basic and acidic residues predominate over residues 208–223 (GRDRSRSRSPRAERRA). Over residues 228–246 (SPRRSRSRSRSRSRSRSRS) the composition is skewed to basic residues. Residues 247 to 258 (ASRSPSRSPSPQ) show a composition bias toward low complexity.

Belongs to the splicing factor SR family. In terms of assembly, interacts with spk-1. In terms of processing, directly phosphorylated by spk-1 in vitro on serine residues of the RS domain. In terms of tissue distribution, predominantly coexpressed with spk-1 in adult hermaphrodite germlines.

It localises to the nucleus. Plays an essential role in embryogenesis. This is Probable splicing factor, arginine/serine-rich 3 (rsp-3) from Caenorhabditis elegans.